The chain runs to 155 residues: Large ribosomal subunit protein eL24 (155 aa).

Residues 98 to 129 are compositionally biased toward basic and acidic residues; sequence PEVRKAKRDDKAKADKEKKKADKAARKAEKAK. The interval 98–155 is disordered; it reads PEVRKAKRDDKAKADKEKKKADKAARKAEKAKLAAAQGSKVSKQQAKGAFQKVAATSR.

The protein belongs to the eukaryotic ribosomal protein eL24 family.

This is Large ribosomal subunit protein eL24 (RPL24) from Candida glabrata (strain ATCC 2001 / BCRC 20586 / JCM 3761 / NBRC 0622 / NRRL Y-65 / CBS 138) (Yeast).